Reading from the N-terminus, the 115-residue chain is Pro-FMRFamide-related neuropeptide FF (115 aa).

The N-terminal stretch at 1-22 (MDARQAAALLLVLLLVTDWSHA) is a signal peptide. Disordered regions lie at residues 20–51 (SHAE…AQTP) and 78–102 (FGRN…LSSP). A propeptide spanning residues 23–66 (EGPGGRDGGDQIFMEEDSGAHPAQDAQTPRSLLRSLLQAMQRPG) is cleaved from the precursor. Residue Phe78 is modified to Phenylalanine amide. A propeptide spanning residues 81–94 (NTRGSWSNKRLSPR) is cleaved from the precursor. The residue at position 112 (Phe112) is a Phenylalanine amide.

This sequence belongs to the FARP (FMRFamide related peptide) family.

The protein localises to the secreted. Functionally, morphine modulating peptides. Have wide-ranging physiologic effects, including the modulation of morphine-induced analgesia, elevation of arterial blood pressure, and increased somatostatin secretion from the pancreas. The neuropeptide FF potentiates and sensitizes ASIC3 cation channel. The protein is Pro-FMRFamide-related neuropeptide FF (NPFF) of Bos taurus (Bovine).